A 459-amino-acid chain; its full sequence is Probable Delta(5) fatty acid desaturase C (459 aa).

The Cytochrome b5 heme-binding domain occupies 9-87; the sequence is KKLYSWKEIS…LKQYEIGQVS (79 aa). Positions 45 and 68 each coordinate heme. 2 helical membrane-spanning segments follow: residues 121–141 and 151–171; these read FAFG…TSYY and FYLN…FSLH. The short motif at 174–178 is the Histidine box-1 element; the sequence is HDACH. Residues 187-207 traverse the membrane as a helical segment; the sequence is VWKWLGATYDLFIGASFFYWC. Residues 210 to 215 carry the Histidine box-2 motif; the sequence is HVIGHH. 2 helical membrane passes run 289 to 309 and 315 to 335; these read FEII…FIIP and LVNL…YLSF. A Histidine box-3 motif is present at residues 394–398; that stretch reads QVVHH.

This sequence belongs to the fatty acid desaturase type 1 family. Fe cation is required as a cofactor.

It localises to the membrane. In Dictyostelium discoideum (Social amoeba), this protein is Probable Delta(5) fatty acid desaturase C.